A 480-amino-acid chain; its full sequence is MPLMVVGTSSHVGKSTMVAAICRCLVRRGIRVAPFKSQNMSLNSFVTADGGEIGIAQAMQAWAARLSPTIDMNPVLLKPKGDCTSQVVLLGHPYKDVPIAEYYMETPYLLTEALAAYGRLVEEYGEVVVEGAGGAAEVNLYDRDIANTLLAEKLGIPLILVADIERGGVFAQVYGTIKLLPAPLRPLVKGIIINKFRGDPAIFANGIRIIEELTGVTVLGVVPHFSLPLPSEDSLSIGDKRHRDLPVRIAVIRLPHISNFTDFELLEQYAAVEYVPCGGSLAGYDCIIIPGTKNTIEDLAALREAGTDREILSAREQGIPVIGICGGYQMLGATLIDDGFESAAGEYPGLGLLDCSTRFATYSKNTMQVKRLAAPVSPILVSMGEVTGYEIHMGVTDPGTDQEAFSGDGRVTADGLVFGTYMHGLFLNPSAADALLAYLYAKKELTYSPIQTGAADPYDLLAGLFEEHVDMEAIVALLEK.

The GATase cobBQ-type domain occupies Pro-246–Ala-431. Catalysis depends on Cys-325, which acts as the Nucleophile. His-423 is an active-site residue.

It belongs to the CobB/CobQ family. CobQ subfamily.

The protein operates within cofactor biosynthesis; adenosylcobalamin biosynthesis. Catalyzes amidations at positions B, D, E, and G on adenosylcobyrinic A,C-diamide. NH(2) groups are provided by glutamine, and one molecule of ATP is hydrogenolyzed for each amidation. This chain is Probable cobyric acid synthase, found in Methanoregula boonei (strain DSM 21154 / JCM 14090 / 6A8).